The chain runs to 51 residues: Micropeptide inhibiting actin cytoskeleton (51 aa).

The tract at residues 1–22 is disordered; it reads MERAGVPGFSPRRSSVEAKMQS.

Interacts with aquaporin AQP2.

Functionally, reduces filamentous actin fibers by interacting with aquaporin AQP2 which leads to inhibition of the expression of SEPTIN4 and integrin ITGB4. Also inhibits the activation of the EREG/EGFR signaling pathway through interaction with AQP2. This is Micropeptide inhibiting actin cytoskeleton from Homo sapiens (Human).